Here is a 443-residue protein sequence, read N- to C-terminus: COP9 signalosome complex subunit 2 (443 aa).

The PCI domain occupies 254 to 416; that stretch reads AHTDFFEAFK…QLLELDHQKR (163 aa).

The protein belongs to the CSN2 family. In terms of assembly, component of the CSN complex, probably composed of cops1, cops2, cops3, cops4, cops5, cops6, cops7, cops8 and cops9.

It localises to the cytoplasm. Its subcellular location is the nucleus. Functionally, essential component of the COP9 signalosome complex (CSN), a complex involved in various cellular and developmental processes. The CSN complex is an essential regulator of the ubiquitin (Ubl) conjugation pathway by mediating the deneddylation of the cullin subunits of E3 ligase complexes, leading to modify the Ubl ligase activity. The chain is COP9 signalosome complex subunit 2 (cops2) from Danio rerio (Zebrafish).